Reading from the N-terminus, the 557-residue chain is MVTEWIQLLIFLFALLIFSPLFGLGLYKVYLYKTSGFEKFLYKICGIDPNRNMDWKEYALSLLVFNFFGFLLLFLILFFQNYLPLNPENFPGLVWDLAFNTAVSFATNTNWQAYSGESTLSFFSQMAGLTTQNFLSATTGLCVLLALSRGISVNYNVFALGNFWKDMIRGTLYVLLPLSFIFALFLVGFGVVQTFSESVSAITLEGNTQIIPLGPVASQVAIKQLGTNGGGYFGVNASHPFENPSPISNFLQMFSILILPGACVFLYGRITGSIRHAWAIFSVMFTILCVGILIVWTFESSWNPISGTLGFWEGKEIRFGILNSSIWEVATTVASNGSVNSMHDSFSPIGGLVGILNIQLREIVFGGVGAGMYGMILFVLLTVFLSGIMVGRSPEYLGKKIEKREIQMSILGILLPSTIILLFTAISVSVSDALSSLTNRGPHGLSEILYAFSSGAGNNGSAFAGLNANTTYYNVMIAIAMILGRFGVILPVLVIAGSLAQKKRSEIVSEGSFSTEGGTFYILLLSVIIIVGALTFFPVLTIGPILEHFIMFQNLTF.

10 helical membrane-spanning segments follow: residues 6 to 26, 59 to 79, 127 to 147, 172 to 192, 247 to 267, 278 to 298, 363 to 383, 410 to 430, 475 to 495, and 520 to 540; these read IQLL…GLGL, ALSL…ILFF, AGLT…LLAL, LYVL…FGVV, ISNF…VFLY, WAIF…VWTF, IVFG…LLTV, ILGI…SVSV, VMIA…VLVI, and FYIL…FPVL.

It belongs to the KdpA family. In terms of assembly, the system is composed of three essential subunits: KdpA, KdpB and KdpC.

Its subcellular location is the cell inner membrane. Functionally, part of the high-affinity ATP-driven potassium transport (or Kdp) system, which catalyzes the hydrolysis of ATP coupled with the electrogenic transport of potassium into the cytoplasm. This subunit binds the periplasmic potassium ions and delivers the ions to the membrane domain of KdpB through an intramembrane tunnel. In Leptospira interrogans serogroup Icterohaemorrhagiae serovar Lai (strain 56601), this protein is Potassium-transporting ATPase potassium-binding subunit.